Reading from the N-terminus, the 212-residue chain is Bilin biosynthesis protein PecF (212 aa).

This sequence belongs to the CpcE/RpcE/PecE family.

An enzyme involved in the biosynthesis of bilin. The protein is Bilin biosynthesis protein PecF (pecF) of Mastigocladus laminosus (Fischerella sp.).